Reading from the N-terminus, the 765-residue chain is 5-methyltetrahydropteroyltriglutamate--homocysteine methyltransferase (765 aa).

5-methyltetrahydropteroyltri-L-glutamate contacts are provided by residues 18–21 (REWK) and Lys-114. Residues 437–439 (IGS) and Glu-490 each bind L-homocysteine. L-methionine is bound by residues 437–439 (IGS) and Glu-490. Position 567 (Trp-567) interacts with 5-methyltetrahydropteroyltri-L-glutamate. Residue Asp-605 coordinates L-homocysteine. Residue Asp-605 coordinates L-methionine. Glu-611 contributes to the 5-methyltetrahydropteroyltri-L-glutamate binding site. Positions 647, 649, and 671 each coordinate Zn(2+). His-700 acts as the Proton donor in catalysis. Cys-732 serves as a coordination point for Zn(2+).

Belongs to the vitamin-B12 independent methionine synthase family. Zn(2+) serves as cofactor.

It carries out the reaction 5-methyltetrahydropteroyltri-L-glutamate + L-homocysteine = tetrahydropteroyltri-L-glutamate + L-methionine. The protein operates within amino-acid biosynthesis; L-methionine biosynthesis via de novo pathway; L-methionine from L-homocysteine (MetE route): step 1/1. In terms of biological role, catalyzes the transfer of a methyl group from 5-methyltetrahydrofolate to homocysteine resulting in methionine formation. In Listeria monocytogenes serotype 4b (strain F2365), this protein is 5-methyltetrahydropteroyltriglutamate--homocysteine methyltransferase.